A 247-amino-acid chain; its full sequence is Carboxy-S-adenosyl-L-methionine synthase (247 aa).

S-adenosyl-L-methionine is bound by residues Tyr39, 64–66, 89–90, 117–118, Asn132, and Arg199; these read GCS, DN, and DI.

The protein belongs to the class I-like SAM-binding methyltransferase superfamily. Cx-SAM synthase family. As to quaternary structure, homodimer.

It carries out the reaction prephenate + S-adenosyl-L-methionine = carboxy-S-adenosyl-L-methionine + 3-phenylpyruvate + H2O. Its function is as follows. Catalyzes the conversion of S-adenosyl-L-methionine (SAM) to carboxy-S-adenosyl-L-methionine (Cx-SAM). This is Carboxy-S-adenosyl-L-methionine synthase from Pectobacterium atrosepticum (strain SCRI 1043 / ATCC BAA-672) (Erwinia carotovora subsp. atroseptica).